The sequence spans 116 residues: Hydrogenase maturation factor HypA (116 aa).

His2 contributes to the Ni(2+) binding site. Zn(2+) contacts are provided by Cys73, Cys76, Cys90, and Cys93.

This sequence belongs to the HypA/HybF family.

Functionally, involved in the maturation of [NiFe] hydrogenases. Required for nickel insertion into the metal center of the hydrogenase. The protein is Hydrogenase maturation factor HypA of Escherichia coli O6:H1 (strain CFT073 / ATCC 700928 / UPEC).